We begin with the raw amino-acid sequence, 479 residues long: Outer membrane protein OprJ (479 aa).

The first 19 residues, 1-19 (MRKPAFGVSALLIALTLGA), serve as a signal peptide directing secretion. Cys-20 carries N-palmitoyl cysteine lipidation. Cys-20 carries the S-diacylglycerol cysteine lipid modification. The disordered stretch occupies residues 102–121 (LNAAATGNRQRQPADLSAGN).

Belongs to the outer membrane factor (OMF) (TC 1.B.17) family.

The protein resides in the cell outer membrane. Functionally, channel-forming component of a multidrug resistance efflux pump. This chain is Outer membrane protein OprJ (oprJ), found in Pseudomonas aeruginosa (strain ATCC 15692 / DSM 22644 / CIP 104116 / JCM 14847 / LMG 12228 / 1C / PRS 101 / PAO1).